A 416-amino-acid chain; its full sequence is Multifunctional CCA protein (416 aa).

Positions 8 and 11 each coordinate ATP. 2 residues coordinate CTP: glycine 8 and arginine 11. Mg(2+)-binding residues include aspartate 21 and aspartate 23. ATP is bound by residues arginine 91, arginine 137, and arginine 140. The CTP site is built by arginine 91, arginine 137, and arginine 140. Residues 226–327 (TGVHIMLVID…VNLLERCDAF (102 aa)) enclose the HD domain.

It belongs to the tRNA nucleotidyltransferase/poly(A) polymerase family. Bacterial CCA-adding enzyme type 1 subfamily. In terms of assembly, monomer. Can also form homodimers and oligomers. Mg(2+) is required as a cofactor. Requires Ni(2+) as cofactor.

It catalyses the reaction a tRNA precursor + 2 CTP + ATP = a tRNA with a 3' CCA end + 3 diphosphate. The enzyme catalyses a tRNA with a 3' CCA end + 2 CTP + ATP = a tRNA with a 3' CCACCA end + 3 diphosphate. Catalyzes the addition and repair of the essential 3'-terminal CCA sequence in tRNAs without using a nucleic acid template. Adds these three nucleotides in the order of C, C, and A to the tRNA nucleotide-73, using CTP and ATP as substrates and producing inorganic pyrophosphate. tRNA 3'-terminal CCA addition is required both for tRNA processing and repair. Also involved in tRNA surveillance by mediating tandem CCA addition to generate a CCACCA at the 3' terminus of unstable tRNAs. While stable tRNAs receive only 3'-terminal CCA, unstable tRNAs are marked with CCACCA and rapidly degraded. The chain is Multifunctional CCA protein from Janthinobacterium sp. (strain Marseille) (Minibacterium massiliensis).